The chain runs to 309 residues: Olfactory receptor 8U9 (309 aa).

Residues 1–28 lie on the Extracellular side of the membrane; sequence MTQINCTQVTEFILVGLTDRQELKMPLF. An N-linked (GlcNAc...) asparagine glycan is attached at Asn5. A helical membrane pass occupies residues 29-49; it reads VLFLSIYLFTVVGNLGLILLI. Residues 50–56 are Cytoplasmic-facing; that stretch reads RTDEKLN. A helical membrane pass occupies residues 57-77; that stretch reads TPMYFFLSNLAFVDFCYSSVI. Residues 78–97 lie on the Extracellular side of the membrane; that stretch reads TPKMLGNFLYKQNSISFNAC. Cys97 and Cys179 are oxidised to a cystine. A helical transmembrane segment spans residues 98-118; the sequence is AAQLGCFLAFMTAECLLLASM. At 119-143 the chain is on the cytoplasmic side; sequence AYDRYVAICNPLMYMVVMSPGICIQ. A helical membrane pass occupies residues 144–164; the sequence is LVAAPHSYSILVALFHTILTF. The Extracellular segment spans residues 165 to 204; sequence RLSYCHSNIVNHFYCDDMPLLRLTCSDTRFKQLWIFACAG. A helical membrane pass occupies residues 205–225; that stretch reads IMFISSLLIVFVSYMFIISAI. At 226–239 the chain is on the cytoplasmic side; that stretch reads LRMHSAEGRQKAFS. A helical membrane pass occupies residues 240–260; that stretch reads TCGSHMLAVTIFYGTLIFMYL. Over 261 to 272 the chain is Extracellular; the sequence is QPSSSHALDTDK. Residues 273 to 293 form a helical membrane-spanning segment; it reads MASVFYTVIIPMLNPLIYSLQ. Topologically, residues 294–309 are cytoplasmic; the sequence is NKEVKEALKKIIINKN.

Belongs to the G-protein coupled receptor 1 family.

Its subcellular location is the cell membrane. Odorant receptor. This Homo sapiens (Human) protein is Olfactory receptor 8U9 (OR8U9).